Consider the following 353-residue polypeptide: UPF0283 membrane protein YcjF (353 aa).

The next 3 helical transmembrane spans lie at 70–90 (MVMG…IQWT), 100–120 (VALG…GSVV), and 213–233 (ESTL…FIAW).

This sequence belongs to the UPF0283 family.

It localises to the cell inner membrane. This chain is UPF0283 membrane protein YcjF, found in Shigella flexneri serotype 5b (strain 8401).